Here is a 513-residue protein sequence, read N- to C-terminus: Sugar transport protein 7 (513 aa).

Residues M1 to Y26 lie on the Cytoplasmic side of the membrane. 12 helical membrane passes run V27–I47, G84–S104, I121–A141, I144–V164, G171–V191, L205–P225, L286–F306, Y324–V344, A351–L371, V387–L407, I427–L447, and F452–L472. The Cytoplasmic portion of the chain corresponds to L473–V513.

It belongs to the major facilitator superfamily. Sugar transporter (TC 2.A.1.1) family.

It is found in the cell membrane. Mediates an active uptake of hexoses, probably by sugar/hydrogen symport. This chain is Sugar transport protein 7 (STP7), found in Arabidopsis thaliana (Mouse-ear cress).